Reading from the N-terminus, the 285-residue chain is Bifunctional protein FolD (285 aa).

166–168 contacts NADP(+); it reads GAS.

Belongs to the tetrahydrofolate dehydrogenase/cyclohydrolase family. Homodimer.

It carries out the reaction (6R)-5,10-methylene-5,6,7,8-tetrahydrofolate + NADP(+) = (6R)-5,10-methenyltetrahydrofolate + NADPH. The catalysed reaction is (6R)-5,10-methenyltetrahydrofolate + H2O = (6R)-10-formyltetrahydrofolate + H(+). It functions in the pathway one-carbon metabolism; tetrahydrofolate interconversion. In terms of biological role, catalyzes the oxidation of 5,10-methylenetetrahydrofolate to 5,10-methenyltetrahydrofolate and then the hydrolysis of 5,10-methenyltetrahydrofolate to 10-formyltetrahydrofolate. The chain is Bifunctional protein FolD from Thioalkalivibrio sulfidiphilus (strain HL-EbGR7).